Reading from the N-terminus, the 101-residue chain is UPF0235 protein Maeo_0841 (101 aa).

The protein belongs to the UPF0235 family.

The chain is UPF0235 protein Maeo_0841 from Methanococcus aeolicus (strain ATCC BAA-1280 / DSM 17508 / OCM 812 / Nankai-3).